Consider the following 908-residue polypeptide: Translation initiation factor IF-2 (908 aa).

The segment at 145–312 (EIPGLTQRAK…KGKKRQAEKI (168 aa)) is disordered. Positions 167–177 (VVERPEARPSA) are enriched in basic and acidic residues. Composition is skewed to low complexity over residues 194 to 217 (RPEG…PRPG) and 263 to 276 (VAGA…GAAV). A compositionally biased stretch (basic and acidic residues) spans 278–296 (KRKEEFKKTELFEKHERVF). The region spanning 408-577 (KRPPVVTIMG…LLQADVLELK (170 aa)) is the tr-type G domain. The tract at residues 417-424 (GHVDHGKT) is G1. GTP is bound at residue 417 to 424 (GHVDHGKT). Residues 442 to 446 (GITQH) form a G2 region. Residues 463–466 (DTPG) are G3. Residues 463 to 467 (DTPGH) and 517 to 520 (NKID) contribute to the GTP site. Positions 517-520 (NKID) are G4. The segment at 553-555 (SAK) is G5.

It belongs to the TRAFAC class translation factor GTPase superfamily. Classic translation factor GTPase family. IF-2 subfamily.

It localises to the cytoplasm. One of the essential components for the initiation of protein synthesis. Protects formylmethionyl-tRNA from spontaneous hydrolysis and promotes its binding to the 30S ribosomal subunits. Also involved in the hydrolysis of GTP during the formation of the 70S ribosomal complex. This Geotalea daltonii (strain DSM 22248 / JCM 15807 / FRC-32) (Geobacter daltonii) protein is Translation initiation factor IF-2.